Consider the following 205-residue polypeptide: MIKVYGVPGWGSTISELMLTLADIPYQFVDVSGFDHEGASRELLKTLNPLCQVPTLALENDEIMTETAAIALMVLDRRPDLAPPVGRAERQLFQRLLVWLVANVYPTFTFADYPERWAPDAPEQLKKNVIEYRKSLYIWLNSQLTAEPYAFGEQLTLVDCYLCTMRTWGPGHEWFQDNATNISAIADAVCQLPKLQEVLKRNEII.

In terms of domain architecture, GST N-terminal spans 1–82 (MIKVYGVPGW…MVLDRRPDLA (82 aa)). Glutathione is bound by residues V53 and 66–67 (ET). In terms of domain architecture, GST C-terminal spans 86 to 205 (GRAERQLFQR…QEVLKRNEII (120 aa)).

It belongs to the GST superfamily. Beta family.

This is an uncharacterized protein from Escherichia coli (strain K12).